The chain runs to 310 residues: Nucleotide-binding protein BAD_0837 (310 aa).

Residue 31–38 (GMSGAGRS) participates in ATP binding. 82-85 (DVRS) is a binding site for GTP.

The protein belongs to the RapZ-like family.

In terms of biological role, displays ATPase and GTPase activities. The sequence is that of Nucleotide-binding protein BAD_0837 from Bifidobacterium adolescentis (strain ATCC 15703 / DSM 20083 / NCTC 11814 / E194a).